The chain runs to 298 residues: Cyanophycinase (298 aa).

Active-site charge relay system residues include Ser155, Glu173, and His197.

It belongs to the peptidase S51 family.

The enzyme catalyses [L-4-(L-arginin-2-N-yl)aspartate](n) + H2O = [L-4-(L-arginin-2-N-yl)aspartate](n-1) + L-4-(L-arginin-2-N-yl)aspartate. Exopeptidase that catalyzes the hydrolytic cleavage of multi-L-arginyl-poly-L-aspartic acid (cyanophycin; a water-insoluble reserve polymer) into aspartate-arginine dipeptides. This is Cyanophycinase (cphB) from Trichormus variabilis (strain ATCC 29413 / PCC 7937) (Anabaena variabilis).